A 63-amino-acid chain; its full sequence is MPQEFEQIRSADQPLDSEESAPVAGARTDDTVDALDAVLDDIESVLETNAEEYVGSFVQKGGE.

Residues 1-28 (MPQEFEQIRSADQPLDSEESAPVAGART) are disordered. The ARC ATPase binding stretch occupies residues 19–57 (ESAPVAGARTDDTVDALDAVLDDIESVLETNAEEYVGSF). An Isoglutamyl lysine isopeptide (Glu-Lys) (interchain with K-? in acceptor proteins) cross-link involves residue glutamate 63.

This sequence belongs to the prokaryotic ubiquitin-like protein family. In terms of assembly, strongly interacts with the proteasome-associated ATPase ARC through a hydrophobic interface; the interacting region of Pup lies in its C-terminal half. There is one Pup binding site per ARC hexamer ring.

It functions in the pathway protein degradation; proteasomal Pup-dependent pathway. Its function is as follows. Protein modifier that is covalently attached to lysine residues of substrate proteins, thereby targeting them for proteasomal degradation. The tagging system is termed pupylation. This Bifidobacterium dentium (strain ATCC 27534 / DSM 20436 / JCM 1195 / Bd1) protein is Prokaryotic ubiquitin-like protein Pup.